The following is a 155-amino-acid chain: 3-hydroxyacyl-[acyl-carrier-protein] dehydratase FabZ (155 aa).

Histidine 57 is an active-site residue.

It belongs to the thioester dehydratase family. FabZ subfamily.

Its subcellular location is the cytoplasm. It catalyses the reaction a (3R)-hydroxyacyl-[ACP] = a (2E)-enoyl-[ACP] + H2O. In terms of biological role, involved in unsaturated fatty acids biosynthesis. Catalyzes the dehydration of short chain beta-hydroxyacyl-ACPs and long chain saturated and unsaturated beta-hydroxyacyl-ACPs. This is 3-hydroxyacyl-[acyl-carrier-protein] dehydratase FabZ from Cereibacter sphaeroides (strain ATCC 17025 / ATH 2.4.3) (Rhodobacter sphaeroides).